Reading from the N-terminus, the 395-residue chain is Transcription termination/antitermination protein NusA (395 aa).

The 65-residue stretch at 137-201 (NSVLMGQVIL…TKKGLLLELS (65 aa)) folds into the S1 motif domain. KH domains lie at 243 to 291 (SHNS…TLAL) and 331 to 378 (KVRL…NENE).

This sequence belongs to the NusA family. In terms of assembly, monomer. Binds directly to the core enzyme of the DNA-dependent RNA polymerase and to nascent RNA.

The protein resides in the cytoplasm. Functionally, participates in both transcription termination and antitermination. The polypeptide is Transcription termination/antitermination protein NusA (Helicobacter pylori (strain J99 / ATCC 700824) (Campylobacter pylori J99)).